The following is a 151-amino-acid chain: Large ribosomal subunit protein uL22 (151 aa).

It belongs to the universal ribosomal protein uL22 family. Part of the 50S ribosomal subunit.

Functionally, this protein binds specifically to 23S rRNA. It makes multiple contacts with different domains of the 23S rRNA in the assembled 50S subunit and ribosome. The globular domain of the protein is located near the polypeptide exit tunnel on the outside of the subunit, while an extended beta-hairpin is found that lines the wall of the exit tunnel in the center of the 70S ribosome. In Thermoplasma acidophilum (strain ATCC 25905 / DSM 1728 / JCM 9062 / NBRC 15155 / AMRC-C165), this protein is Large ribosomal subunit protein uL22.